Here is a 164-residue protein sequence, read N- to C-terminus: Peptidyl-prolyl cis-trans isomerase A (164 aa).

Met-1 bears the N-acetylmethionine mark. Residue Val-2 is modified to N-acetylvaline; in Peptidyl-prolyl cis-trans isomerase A, N-terminally processed. A PPIase cyclophilin-type domain is found at 7-163 (FFDIAVDGEP…KKITIADCGQ (157 aa)). N6-acetyllysine; alternate is present on Lys-28. A Glycyl lysine isopeptide (Lys-Gly) (interchain with G-Cter in SUMO2); alternate cross-link involves residue Lys-28. Residue Lys-28 forms a Glycyl lysine isopeptide (Lys-Gly) (interchain with G-Cter in ubiquitin); alternate linkage. An N6-acetyllysine mark is found at Lys-44 and Lys-76. Ser-77 is modified (phosphoserine). At Lys-82 the chain carries N6-acetyllysine; alternate. Lys-82 participates in a covalent cross-link: Glycyl lysine isopeptide (Lys-Gly) (interchain with G-Cter in SUMO2); alternate. The residue at position 93 (Thr-93) is a Phosphothreonine. A glycan (N-linked (GlcNAc...) asparagine) is linked at Asn-108. Residues Lys-125, Lys-131, and Lys-133 each carry the N6-acetyllysine modification.

The protein belongs to the cyclophilin-type PPIase family. PPIase A subfamily. In terms of assembly, interacts with protein phosphatase PPP3CA/calcineurin A. Interacts with isoform 2 of BSG/CD147. Interacts with FOXO1; the interaction promotes FOXO1 dephosphorylation, nuclear accumulation and transcriptional activity. Interacts with integrin ITGA2B:ITGB3; the interaction is ROS and peptidyl-prolyl cis-trans isomerase (PPIase) activity-dependent and is increased in the presence of thrombin. Interacts with MAP3K5. Interacts with TARDBP; the interaction is dependent on the RNA-binding activity of TARDBP and the PPIase activity of PPIA/CYPA and the acetylation of PPIA/CYPA at Lys-125 favors the interaction. Interacts with HNRNPA1, HNRNPA2B1, HNRNPC, RBMX, HNRNPK and HNRNPM. Acetylation at Lys-125 markedly inhibits catalysis of cis to trans isomerization. PPIA acetylation also antagonizes the immunosuppressive effects of cyclosporine by inhibiting the sequential steps of cyclosporine binding and calcineurin inhibition. Acetylation at Lys-125 favors the interaction with TARDBP.

It localises to the cytoplasm. It is found in the secreted. The protein localises to the nucleus. It catalyses the reaction [protein]-peptidylproline (omega=180) = [protein]-peptidylproline (omega=0). Its activity is regulated as follows. Binds cyclosporin A (CsA). CsA mediates some of its effects via an inhibitory action on PPIase. In terms of biological role, catalyzes the cis-trans isomerization of proline imidic peptide bonds in oligopeptides. Exerts a strong chemotactic effect on leukocytes partly through activation of one of its membrane receptors BSG/CD147, initiating a signaling cascade that culminates in MAPK/ERK activation. Activates endothelial cells (ECs) in a proinflammatory manner by stimulating activation of NF-kappa-B and ERK, JNK and p38 MAP-kinases and by inducing expression of adhesion molecules including SELE and VCAM1. Induces apoptosis in ECs by promoting the FOXO1-dependent expression of CCL2 and BCL2L11 which are involved in EC chemotaxis and apoptosis. In response to oxidative stress, initiates proapoptotic and antiapoptotic signaling in ECs via activation of NF-kappa-B and AKT1 and up-regulation of antiapoptotic protein BCL2. Negatively regulates MAP3K5/ASK1 kinase activity, autophosphorylation and oxidative stress-induced apoptosis mediated by MAP3K5/ASK1. Necessary for the assembly of TARDBP in heterogeneous nuclear ribonucleoprotein (hnRNP) complexes and regulates TARDBP binding to RNA UG repeats and TARDBP-dependent expression of HDAC6, ATG7 and VCP which are involved in clearance of protein aggregates. Plays an important role in platelet activation and aggregation. Regulates calcium mobilization and integrin ITGA2B:ITGB3 bidirectional signaling via increased ROS production as well as by facilitating the interaction between integrin and the cell cytoskeleton. Binds heparan sulfate glycosaminoglycans. The polypeptide is Peptidyl-prolyl cis-trans isomerase A (PPIA) (Saguinus oedipus (Cotton-top tamarin)).